The sequence spans 345 residues: Nuclear hormone receptor family nhr-176 (345 aa).

The nuclear receptor DNA-binding region spans 7–82 (IQPCLVCGQS…AGMLEKMVFS (76 aa)). The segment at 10 to 30 (CLVCGQSSNSILFGAPSCRAC) adopts an NR C4-type zinc-finger fold. An NR C4-type; degenerate zinc finger spans residues 46 to 65 (NNCLGECSFAKKSMKPCQSC). The region spanning 92-342 (FEKSILEELE…CPLYAISTNS (251 aa)) is the NR LBD domain. Residues 331–342 (SGCPLYAISTNS) are AF-2.

The protein localises to the nucleus. Functionally, nuclear hormone receptor. Binds to xenobiotic ligand thiabendazole (TBZ), in vitro. Involved in the up-regulation of phase I detoxification genes, such as probable cytochrome P450 cyp-35d1, in response to TBZ. This chain is Nuclear hormone receptor family nhr-176, found in Caenorhabditis elegans.